We begin with the raw amino-acid sequence, 215 residues long: UPF0502 protein Shew_1617 (215 aa).

It belongs to the UPF0502 family.

This is UPF0502 protein Shew_1617 from Shewanella loihica (strain ATCC BAA-1088 / PV-4).